We begin with the raw amino-acid sequence, 297 residues long: Acetyl-coenzyme A carboxylase carboxyl transferase subunit beta (297 aa).

One can recognise a CoA carboxyltransferase N-terminal domain in the interval 25-294 (LWVKCPETGQ…VPPKGRLPAP (270 aa)).

The protein belongs to the AccD/PCCB family. Acetyl-CoA carboxylase is a heterohexamer composed of biotin carboxyl carrier protein (AccB), biotin carboxylase (AccC) and two subunits each of ACCase subunit alpha (AccA) and ACCase subunit beta (AccD).

The protein resides in the cytoplasm. It carries out the reaction N(6)-carboxybiotinyl-L-lysyl-[protein] + acetyl-CoA = N(6)-biotinyl-L-lysyl-[protein] + malonyl-CoA. The protein operates within lipid metabolism; malonyl-CoA biosynthesis; malonyl-CoA from acetyl-CoA: step 1/1. Its function is as follows. Component of the acetyl coenzyme A carboxylase (ACC) complex. Biotin carboxylase (BC) catalyzes the carboxylation of biotin on its carrier protein (BCCP) and then the CO(2) group is transferred by the transcarboxylase to acetyl-CoA to form malonyl-CoA. This chain is Acetyl-coenzyme A carboxylase carboxyl transferase subunit beta, found in Azorhizobium caulinodans (strain ATCC 43989 / DSM 5975 / JCM 20966 / LMG 6465 / NBRC 14845 / NCIMB 13405 / ORS 571).